Here is a 227-residue protein sequence, read N- to C-terminus: Enolase-phosphatase E1 (227 aa).

It belongs to the HAD-like hydrolase superfamily. MasA/MtnC family. Monomer. Mg(2+) serves as cofactor.

The catalysed reaction is 5-methylsulfanyl-2,3-dioxopentyl phosphate + H2O = 1,2-dihydroxy-5-(methylsulfanyl)pent-1-en-3-one + phosphate. Its pathway is amino-acid biosynthesis; L-methionine biosynthesis via salvage pathway; L-methionine from S-methyl-5-thio-alpha-D-ribose 1-phosphate: step 3/6. It participates in amino-acid biosynthesis; L-methionine biosynthesis via salvage pathway; L-methionine from S-methyl-5-thio-alpha-D-ribose 1-phosphate: step 4/6. In terms of biological role, bifunctional enzyme that catalyzes the enolization of 2,3-diketo-5-methylthiopentyl-1-phosphate (DK-MTP-1-P) into the intermediate 2-hydroxy-3-keto-5-methylthiopentenyl-1-phosphate (HK-MTPenyl-1-P), which is then dephosphorylated to form the acireductone 1,2-dihydroxy-3-keto-5-methylthiopentene (DHK-MTPene). In Pseudomonas savastanoi pv. phaseolicola (strain 1448A / Race 6) (Pseudomonas syringae pv. phaseolicola (strain 1448A / Race 6)), this protein is Enolase-phosphatase E1.